The sequence spans 103 residues: Large ribosomal subunit protein eL43 (103 aa).

Belongs to the eukaryotic ribosomal protein eL43 family.

This chain is Large ribosomal subunit protein eL43 (RPL37A), found in Tetrahymena thermophila (strain SB210).